The primary structure comprises 624 residues: 1-deoxy-D-xylulose-5-phosphate synthase (624 aa).

Thiamine diphosphate-binding positions include His-80 and 121–123; that span reads GHS. Asp-152 lines the Mg(2+) pocket. Residues 153-154, Asn-181, Tyr-289, and Glu-371 each bind thiamine diphosphate; that span reads GA. Residue Asn-181 participates in Mg(2+) binding.

This sequence belongs to the transketolase family. DXPS subfamily. In terms of assembly, homodimer. It depends on Mg(2+) as a cofactor. Requires thiamine diphosphate as cofactor.

It catalyses the reaction D-glyceraldehyde 3-phosphate + pyruvate + H(+) = 1-deoxy-D-xylulose 5-phosphate + CO2. It functions in the pathway metabolic intermediate biosynthesis; 1-deoxy-D-xylulose 5-phosphate biosynthesis; 1-deoxy-D-xylulose 5-phosphate from D-glyceraldehyde 3-phosphate and pyruvate: step 1/1. Its function is as follows. Catalyzes the acyloin condensation reaction between C atoms 2 and 3 of pyruvate and glyceraldehyde 3-phosphate to yield 1-deoxy-D-xylulose-5-phosphate (DXP). This chain is 1-deoxy-D-xylulose-5-phosphate synthase, found in Blochmanniella pennsylvanica (strain BPEN).